A 360-amino-acid polypeptide reads, in one-letter code: Amine dehydrogenase (360 aa).

The protein belongs to the amine dehydrogenase family. In terms of assembly, homodimer.

The enzyme catalyses a secondary alkyl amine + NAD(+) + H2O = a ketone + NH4(+) + NADH + H(+). It carries out the reaction a secondary alkyl amine + NADP(+) + H2O = a ketone + NH4(+) + NADPH + H(+). The catalysed reaction is serinol + NAD(+) + H2O = dihydroxyacetone + NH4(+) + NADH + H(+). It catalyses the reaction serinol + NADP(+) + H2O = dihydroxyacetone + NH4(+) + NADPH + H(+). The enzyme catalyses 2-aminopropan-1-ol + NAD(+) + H2O = hydroxyacetone + NH4(+) + NADH + H(+). It carries out the reaction (R)-1-phenylethylamine + NAD(+) + H2O = acetophenone + NH4(+) + NADH + H(+). The catalysed reaction is (S)-1-phenylethylamine + NAD(+) + H2O = acetophenone + NH4(+) + NADH + H(+). It catalyses the reaction (2S)-2-aminobutan-1-ol + NAD(+) + H2O = 1-hydroxy-2-butanone + NH4(+) + NADH + H(+). The enzyme catalyses (2S)-2-amino-3-methylbutan-1-ol + NAD(+) + H2O = 1-hydroxy-3-methylbutan-2-one + NH4(+) + NADH + H(+). It carries out the reaction 2-aminopentan-1-ol + NAD(+) + H2O = 1-hydroxypentan-2-one + NH4(+) + NADH + H(+). The catalysed reaction is (S)-leucinol + NAD(+) + H2O = 1-hydroxy-4-methylpentan-2-one + NH4(+) + NADH + H(+). It catalyses the reaction (S)-isoleucinol + NAD(+) + H2O = (3S)-1-hydroxy-3-methylpentan-2-one + NH4(+) + NADH + H(+). The enzyme catalyses (S)-methioninol + NAD(+) + H2O = 1-hydroxy-4-(methythio)butan-2-one + NH4(+) + NADH + H(+). It carries out the reaction 2-aminocyclohexanol + NAD(+) + H2O = 2-hydroxycyclohexan-1-one + NH4(+) + NADH + H(+). The catalysed reaction is L-alanine + NAD(+) + H2O = pyruvate + NH4(+) + NADH + H(+). It catalyses the reaction D-alanine + NAD(+) + H2O = pyruvate + NH4(+) + NADH + H(+). The enzyme catalyses L-aspartate + NAD(+) + H2O = oxaloacetate + NH4(+) + NADH + H(+). It carries out the reaction D-aspartate + NAD(+) + H2O = oxaloacetate + NH4(+) + NADH + H(+). The catalysed reaction is L-glutamate + NAD(+) + H2O = 2-oxoglutarate + NH4(+) + NADH + H(+). It catalyses the reaction D-glutamate + NAD(+) + H2O = 2-oxoglutarate + NH4(+) + NADH + H(+). The enzyme catalyses L-serine + NAD(+) + H2O = 3-hydroxypyruvate + NH4(+) + NADH + H(+). It carries out the reaction D-serine + NAD(+) + H2O = 3-hydroxypyruvate + NH4(+) + NADH + H(+). The catalysed reaction is methylamine + NAD(+) + H2O = formaldehyde + NH4(+) + NADH + H(+). It catalyses the reaction ethylamine + NAD(+) + H2O = acetaldehyde + NH4(+) + NADH + H(+). The enzyme catalyses propylamine + NAD(+) + H2O = propanal + NH4(+) + NADH + H(+). It carries out the reaction butylamine + NAD(+) + H2O = butanal + NH4(+) + NADH + H(+). The catalysed reaction is hexylamine + NAD(+) + H2O = hexanal + NH4(+) + NADH + H(+). It catalyses the reaction octylamine + NAD(+) + H2O = octanal + NH4(+) + NADH + H(+). The enzyme catalyses (R)-sec-butylamine + NAD(+) + H2O = butan-2-one + NH4(+) + NADH + H(+). It carries out the reaction (S)-sec-butylamine + NAD(+) + H2O = butan-2-one + NH4(+) + NADH + H(+). The catalysed reaction is 2-aminopentane + NAD(+) + H2O = pentan-2-one + NH4(+) + NADH + H(+). It catalyses the reaction 3-aminopentane + NAD(+) + H2O = pentan-3-one + NH4(+) + NADH + H(+). The enzyme catalyses (2R)-heptan-2-amine + NAD(+) + H2O = heptan-2-one + NH4(+) + NADH + H(+). It carries out the reaction (2S)-heptan-2-amine + NAD(+) + H2O = heptan-2-one + NH4(+) + NADH + H(+). The catalysed reaction is benzylamine + NAD(+) + H2O = benzaldehyde + NH4(+) + NADH + H(+). It catalyses the reaction 3-aminobutan-2-ol + NAD(+) + H2O = acetoin + NH4(+) + NADH + H(+). The enzyme catalyses 3-aminobutan-1-ol + NAD(+) + H2O = 4-hydroxybutan-2-one + NH4(+) + NADH + H(+). It carries out the reaction 5-hydroxypentan-2-amine + NAD(+) + H2O = 5-hydroxypentan-2-one + NH4(+) + NADH + H(+). The catalysed reaction is 4-hydroxyhexan-3-amine + NAD(+) + H2O = 4-hydroxyhexan-3-one + NH4(+) + NADH + H(+). It catalyses the reaction 5-hydroxyoctan-4-amine + NAD(+) + H2O = 5-hydroxyoctan-4-one + NH4(+) + NADH + H(+). The enzyme catalyses 2-hydroxy-1-phenylethan-1-amine + NAD(+) + H2O = 2-hydroxyacetophenone + NH4(+) + NADH + H(+). It carries out the reaction hexan-2-amine + NAD(+) + H2O = hexan-2-one + NH4(+) + NADH + H(+). The catalysed reaction is 4-phenylbutan-2-amine + NAD(+) + H2O = 4-phenylbutan-2-one + NH4(+) + NADH + H(+). In terms of biological role, catalyzes the reversible oxidative deaminations of a broad range of amines, amino alcohols and amino acids. Catalyzes the reversible dehydrogenation of serinol in the presence of NAD(+) to give dihydroxyacetone, ammonium ion and NADH, while NADP(+) shows a slight activity. Is also able to produce 2-amino-1-propanol and aspartate by the reductive amination of the corresponding keto alcohol (hydroxyacetone) and keto acid (oxaloacetate) in the presence of ammonium ions and NADH, and that of acetophenone from phenylethylamine by the oxidative deamination in the presence of NAD(+). This Streptomyces virginiae (Streptomyces cinnamonensis) protein is Amine dehydrogenase.